The sequence spans 358 residues: MLFHLFYPLASNLKILNIFKYLTFRTIYAMITALIVCFVLGPWIIRKLEGLQARQVIRTDGPESHLEKQGTPTMGGLIILTAIILPTLLWADLTNVYIWLTLFIIVGYGLIGFMDDYLKVVKKNTKGLSARQKMFWQVLLAGGVAVFLYVTPGFNEMLYVPFFKNFHPDLGIFFIPFVTLVIVGASNAVNLTDGLDGLAIGPVAINAATYMLFAYVAGHATLSAYLQIPRVVGAGELAVICGAMVGAGLGFLWFNSYPAEVFMGDVGSLSLGGTLGVIAVLTKQEILLVIVGGIFVIEALSVIFQVGSYKYRGKRIFRMAPIHHHFELKGVAEPKIIVRFWIITIILALVAISTLKMR.

A run of 10 helical transmembrane segments spans residues 26–46 (TIYA…WIIR), 71–91 (TPTM…LLWA), 93–113 (LTNV…LIGF), 134–154 (MFWQ…TPGF), 170–190 (LGIF…NAVN), 197–217 (GLAI…AYVA), 234–254 (AGEL…FLWF), 261–281 (VFMG…IAVL), 286–306 (ILLV…IFQV), and 335–355 (KIIV…ISTL).

The protein belongs to the glycosyltransferase 4 family. MraY subfamily. Requires Mg(2+) as cofactor.

It is found in the cell inner membrane. The catalysed reaction is UDP-N-acetyl-alpha-D-muramoyl-L-alanyl-gamma-D-glutamyl-meso-2,6-diaminopimeloyl-D-alanyl-D-alanine + di-trans,octa-cis-undecaprenyl phosphate = di-trans,octa-cis-undecaprenyl diphospho-N-acetyl-alpha-D-muramoyl-L-alanyl-D-glutamyl-meso-2,6-diaminopimeloyl-D-alanyl-D-alanine + UMP. It participates in cell wall biogenesis; peptidoglycan biosynthesis. Its function is as follows. Catalyzes the initial step of the lipid cycle reactions in the biosynthesis of the cell wall peptidoglycan: transfers peptidoglycan precursor phospho-MurNAc-pentapeptide from UDP-MurNAc-pentapeptide onto the lipid carrier undecaprenyl phosphate, yielding undecaprenyl-pyrophosphoryl-MurNAc-pentapeptide, known as lipid I. This Trichlorobacter lovleyi (strain ATCC BAA-1151 / DSM 17278 / SZ) (Geobacter lovleyi) protein is Phospho-N-acetylmuramoyl-pentapeptide-transferase.